Consider the following 785-residue polypeptide: Phenylalanine--tRNA ligase beta subunit (785 aa).

One can recognise a tRNA-binding domain in the interval 39 to 147; sequence FPIPRGVVFA…DALPPGTPLS (109 aa). Positions 399 to 474 constitute a B5 domain; it reads KPPEAIPFRP…RIQGYETIPL (76 aa). Residues Asp452, Asp458, Glu461, and Glu462 each coordinate Mg(2+). The region spanning 688–780 is the FDX-ACB domain; sequence SRHPAAFRDL…ALRARGFGLR (93 aa).

Belongs to the phenylalanyl-tRNA synthetase beta subunit family. Type 1 subfamily. As to quaternary structure, tetramer of two alpha and two beta subunits. It depends on Mg(2+) as a cofactor.

It localises to the cytoplasm. It catalyses the reaction tRNA(Phe) + L-phenylalanine + ATP = L-phenylalanyl-tRNA(Phe) + AMP + diphosphate + H(+). The polypeptide is Phenylalanine--tRNA ligase beta subunit (pheT) (Thermus thermophilus (strain ATCC 27634 / DSM 579 / HB8)).